The following is an 85-amino-acid chain: Cell division protein ZapA (85 aa).

The stretch at 60-85 (AVNVVHDYLKLKEELERLKGQIKEKD) forms a coiled coil.

It belongs to the ZapA family. Type 2 subfamily. As to quaternary structure, homodimer. Interacts with FtsZ.

The protein resides in the cytoplasm. In terms of biological role, activator of cell division through the inhibition of FtsZ GTPase activity, therefore promoting FtsZ assembly into bundles of protofilaments necessary for the formation of the division Z ring. It is recruited early at mid-cell but it is not essential for cell division. The chain is Cell division protein ZapA from Bacillus licheniformis (strain ATCC 14580 / DSM 13 / JCM 2505 / CCUG 7422 / NBRC 12200 / NCIMB 9375 / NCTC 10341 / NRRL NRS-1264 / Gibson 46).